The sequence spans 272 residues: Insertion element IS600 uncharacterized 31 kDa protein (272 aa).

The region spanning 105-268 (APTAPNQVWV…SPAAFREKYH (164 aa)) is the Integrase catalytic domain.

This chain is Insertion element IS600 uncharacterized 31 kDa protein, found in Shigella sonnei.